A 452-amino-acid chain; its full sequence is Probable multidrug resistance protein NorM (452 aa).

Helical transmembrane passes span 14–34 (LLHI…ITFL), 56–76 (LWTP…PIVA), 97–117 (VAAL…DLIL), 129–149 (IAKH…VYTV), 164–184 (MMIT…FIFG), 195–215 (GAGL…FFII), 244–264 (IGLP…AVTL), 284–304 (ASLL…VVGF), 319–339 (LIGI…ILLF), 360–380 (FLIY…IQGA), 392–412 (AAAF…VGTF), and 417–437 (AFGY…GLFF).

The protein belongs to the multi antimicrobial extrusion (MATE) (TC 2.A.66.1) family.

The protein resides in the cell membrane. In terms of biological role, multidrug efflux pump. The chain is Probable multidrug resistance protein NorM (norM) from Bacillus subtilis (strain 168).